Here is a 215-residue protein sequence, read N- to C-terminus: Protein NETWORKED 3B (215 aa).

An NAB domain is found at serine 5–serine 90. Residues aspartate 134–leucine 165 adopt a coiled-coil conformation.

It belongs to the NET family. In terms of assembly, interacts with F-actin.

In terms of biological role, plant-specific actin binding protein. May be part of a membrane-cytoskeletal adapter complex. The protein is Protein NETWORKED 3B of Arabidopsis thaliana (Mouse-ear cress).